Reading from the N-terminus, the 297-residue chain is Acetyl-coenzyme A carboxylase carboxyl transferase subunit beta (297 aa).

A CoA carboxyltransferase N-terminal domain is found at 27 to 296 (LWHKCPSCEA…PEAAKEVAAV (270 aa)). Cys-31, Cys-34, Cys-50, and Cys-53 together coordinate Zn(2+). A C4-type zinc finger spans residues 31-53 (CPSCEAVLYRPELEKTLDVCPKC).

Belongs to the AccD/PCCB family. Acetyl-CoA carboxylase is a heterohexamer composed of biotin carboxyl carrier protein (AccB), biotin carboxylase (AccC) and two subunits each of ACCase subunit alpha (AccA) and ACCase subunit beta (AccD). Zn(2+) is required as a cofactor.

The protein localises to the cytoplasm. The catalysed reaction is N(6)-carboxybiotinyl-L-lysyl-[protein] + acetyl-CoA = N(6)-biotinyl-L-lysyl-[protein] + malonyl-CoA. Its pathway is lipid metabolism; malonyl-CoA biosynthesis; malonyl-CoA from acetyl-CoA: step 1/1. In terms of biological role, component of the acetyl coenzyme A carboxylase (ACC) complex. Biotin carboxylase (BC) catalyzes the carboxylation of biotin on its carrier protein (BCCP) and then the CO(2) group is transferred by the transcarboxylase to acetyl-CoA to form malonyl-CoA. In Pseudomonas entomophila (strain L48), this protein is Acetyl-coenzyme A carboxylase carboxyl transferase subunit beta.